The primary structure comprises 222 residues: Cytidylate kinase (222 aa).

Residue Gly-11–Thr-19 coordinates ATP.

The protein belongs to the cytidylate kinase family. Type 1 subfamily.

It is found in the cytoplasm. The catalysed reaction is CMP + ATP = CDP + ADP. It catalyses the reaction dCMP + ATP = dCDP + ADP. This Desulforamulus reducens (strain ATCC BAA-1160 / DSM 100696 / MI-1) (Desulfotomaculum reducens) protein is Cytidylate kinase.